The primary structure comprises 510 residues: Probable cytosol aminopeptidase (510 aa).

2 residues coordinate Mn(2+): Lys-282 and Asp-287. The active site involves Lys-294. Mn(2+)-binding residues include Asp-305, Asp-364, and Glu-366. Arg-368 is a catalytic residue.

It belongs to the peptidase M17 family. Mn(2+) serves as cofactor.

It is found in the cytoplasm. The catalysed reaction is Release of an N-terminal amino acid, Xaa-|-Yaa-, in which Xaa is preferably Leu, but may be other amino acids including Pro although not Arg or Lys, and Yaa may be Pro. Amino acid amides and methyl esters are also readily hydrolyzed, but rates on arylamides are exceedingly low.. It catalyses the reaction Release of an N-terminal amino acid, preferentially leucine, but not glutamic or aspartic acids.. Presumably involved in the processing and regular turnover of intracellular proteins. Catalyzes the removal of unsubstituted N-terminal amino acids from various peptides. In Cupriavidus pinatubonensis (strain JMP 134 / LMG 1197) (Cupriavidus necator (strain JMP 134)), this protein is Probable cytosol aminopeptidase.